A 473-amino-acid chain; its full sequence is Methionine aminopeptidase 2 (473 aa).

A disordered region spans residues 23–121; sequence LAEDSSNGTQ…KLVSIDQSYP (99 aa). Polar residues predominate over residues 41–53; it reads KATTAVGQDNGNN. The segment covering 73–83 has biased composition (acidic residues); the sequence is DDDDDDEDDDV. Residues 84–93 show a composition bias toward low complexity; that stretch reads AAAAAAVGDA. A compositionally biased stretch (basic residues) spans 97–113; it reads KKKKKKKSSNKKKKKKL. Histidine 224 provides a ligand contact to substrate. Residues aspartate 244, aspartate 255, and histidine 326 each coordinate a divalent metal cation. Residue histidine 334 coordinates substrate. The a divalent metal cation site is built by glutamate 359 and glutamate 454.

It belongs to the peptidase M24A family. Methionine aminopeptidase eukaryotic type 2 subfamily. Requires Co(2+) as cofactor. The cofactor is Zn(2+). Mn(2+) is required as a cofactor. Fe(2+) serves as cofactor.

Its subcellular location is the cytoplasm. It carries out the reaction Release of N-terminal amino acids, preferentially methionine, from peptides and arylamides.. Cotranslationally removes the N-terminal methionine from nascent proteins. The N-terminal methionine is often cleaved when the second residue in the primary sequence is small and uncharged (Met-Ala-, Cys, Gly, Pro, Ser, Thr, or Val). The protein is Methionine aminopeptidase 2 of Lodderomyces elongisporus (strain ATCC 11503 / CBS 2605 / JCM 1781 / NBRC 1676 / NRRL YB-4239) (Yeast).